A 207-amino-acid polypeptide reads, in one-letter code: Ras-related protein Rab-8B (207 aa).

10 residues coordinate GTP: S17, G18, V19, G20, K21, T22, C23, T35, S39, and T40. T22 is a Mg(2+) binding site. Short sequence motifs (switch) lie at residues 31 to 45 and 63 to 80; these read DAFN…GIDF and DTAG…YYRG. 2 residues coordinate Mg(2+): T40 and D63. GTP is bound at residue G66. T72 carries the post-translational modification Phosphothreonine. Positions 121, 122, 124, 152, and 153 each coordinate GTP. The residue at position 180 (S180) is a Phosphoserine. C204 carries the post-translational modification Cysteine methyl ester. Residue C204 is the site of S-geranylgeranyl cysteine attachment. Positions 205–207 are cleaved as a propeptide — removed in mature form; the sequence is LLL.

This sequence belongs to the small GTPase superfamily. Rab family. As to quaternary structure, associated with actin, delta-catenin and alpha and beta tubulins. Interacts with OTOF. Interacts with PEX5R. Interacts with RAB3IP. Interacts with VIM. Interacts with CDH1. Interacts with MICALL2. Interacts with GDI1, GDI2, CHML and CHM; phosphorylation at Thr-72 disrupts these interactions. Interacts with MICAL1. It depends on Mg(2+) as a cofactor. Phosphorylation of Thr-72 in the switch II region by LRRK2 prevents the association of RAB regulatory proteins, including CHM, CHML and RAB GDP dissociation inhibitors GDI1 and GDI2.

Its subcellular location is the cell membrane. It is found in the cytoplasmic vesicle. It localises to the phagosome membrane. The protein resides in the endosome membrane. It carries out the reaction GTP + H2O = GDP + phosphate + H(+). Its activity is regulated as follows. Regulated by guanine nucleotide exchange factors (GEFs) including RAB3IP/RABIN8 which promotes the exchange of bound GDP for free GTP. Regulated by GTPase activating proteins (GAPs) which increase the GTP hydrolysis activity. Inhibited by GDP dissociation inhibitors (GDIs). Functionally, the small GTPases Rab are key regulators of intracellular membrane trafficking, from the formation of transport vesicles to their fusion with membranes. Rabs cycle between an inactive GDP-bound form and an active GTP-bound form that is able to recruit to membranes different sets of downstream effectors directly responsible for vesicle formation, movement, tethering and fusion. RAB8B may be involved in polarized vesicular trafficking and neurotransmitter release. May participate in cell junction dynamics in Sertoli cells. May also participate in the export of a subset of neosynthesized proteins through a Rab8-Rab10-Rab11-dependent endososomal export route. The protein is Ras-related protein Rab-8B (RAB8B) of Pongo abelii (Sumatran orangutan).